Consider the following 464-residue polypeptide: Phosphoenolpyruvate carboxylase (464 aa).

The protein belongs to the PEPCase type 2 family. Homotetramer. Mg(2+) serves as cofactor.

The enzyme catalyses oxaloacetate + phosphate = phosphoenolpyruvate + hydrogencarbonate. Functionally, catalyzes the irreversible beta-carboxylation of phosphoenolpyruvate (PEP) to form oxaloacetate (OAA), a four-carbon dicarboxylic acid source for the tricarboxylic acid cycle. The polypeptide is Phosphoenolpyruvate carboxylase (Thermofilum pendens (strain DSM 2475 / Hrk 5)).